Here is a 388-residue protein sequence, read N- to C-terminus: Quinolone resistance protein NorA (388 aa).

Helical transmembrane passes span 5–25 (IFVL…VIPV), 42–62 (LLVA…GTLA), 69–89 (LIIC…AVGH), 99–119 (VIGG…IADI), 129–149 (FGYM…IGGF), 157–177 (MPFY…IVLI), 201–221 (WKVF…LSAF), 239–259 (DISI…IYFF), 269–289 (LTFI…LVFA), 293–313 (WSIM…RPAI), 331–351 (LNST…GALF), and 355–375 (IEAP…IVLI).

It belongs to the major facilitator superfamily. TCR/Tet family.

Its subcellular location is the cell membrane. Its function is as follows. Involved in quinolone resistance. May constitute a membrane-associated active efflux pump of hydrophilic quinolones. The polypeptide is Quinolone resistance protein NorA (norA) (Staphylococcus aureus (strain Mu50 / ATCC 700699)).